Reading from the N-terminus, the 101-residue chain is Small ribosomal subunit protein uS14 (101 aa).

The interval 36 to 72 (GTDESREAARAGIQRLPRDASPIRVRNRDGIDGRPRG) is disordered. Over residues 61 to 70 (RNRDGIDGRP) the composition is skewed to basic and acidic residues.

This sequence belongs to the universal ribosomal protein uS14 family. As to quaternary structure, part of the 30S ribosomal subunit. Contacts proteins S3 and S10.

In terms of biological role, binds 16S rRNA, required for the assembly of 30S particles and may also be responsible for determining the conformation of the 16S rRNA at the A site. This is Small ribosomal subunit protein uS14 from Clavibacter michiganensis subsp. michiganensis (strain NCPPB 382).